Here is a 212-residue protein sequence, read N- to C-terminus: 2,3-bisphosphoglycerate-dependent phosphoglycerate mutase (212 aa).

Substrate contacts are provided by residues 9 to 16, 22 to 23, Arg-61, 88 to 91, Lys-99, 115 to 116, and 159 to 160; these read RHGQSEWN, TG, ERDY, RR, and GN. The active-site Tele-phosphohistidine intermediate is His-10. Glu-88 (proton donor/acceptor) is an active-site residue.

Belongs to the phosphoglycerate mutase family. BPG-dependent PGAM subfamily. In terms of assembly, homodimer.

It carries out the reaction (2R)-2-phosphoglycerate = (2R)-3-phosphoglycerate. It participates in carbohydrate degradation; glycolysis; pyruvate from D-glyceraldehyde 3-phosphate: step 3/5. Its function is as follows. Catalyzes the interconversion of 2-phosphoglycerate and 3-phosphoglycerate. The chain is 2,3-bisphosphoglycerate-dependent phosphoglycerate mutase from Methylorubrum populi (strain ATCC BAA-705 / NCIMB 13946 / BJ001) (Methylobacterium populi).